The following is a 500-amino-acid chain: Plexin domain-containing protein 1 (500 aa).

The first 18 residues, 1–18 (MRGELWLLVLVLREAARA), serve as a signal peptide directing secretion. Residues 19 to 426 (LSPQPGAGHD…TKGTPVHLGT (408 aa)) are Extracellular-facing. Disordered stretches follow at residues 20–39 (SPQP…AAKG) and 46–78 (RRAR…DTLP). Ser33 is a glycosylation site (O-linked (Xyl...) (chondroitin sulfate) serine). Residues 47–60 (RARESPGHVSEPDR) show a composition bias toward basic and acidic residues. N-linked (GlcNAc...) asparagine glycans are attached at residues Asn80 and Asn197. The segment at 359–379 (FQDEDHDSASPDTSFSPYDGD) is disordered. Positions 368–379 (SPDTSFSPYDGD) are enriched in polar residues. The chain crosses the membrane as a helical span at residues 427–447 (IVGIVLAVLLVAAIILAGIYI). Residues 448-500 (NGHPTSNAALFFIERRPHHWPAMKFRSHPDHSTYAEVEPSGHEKEGFMEAEQC) lie on the Cytoplasmic side of the membrane. Residues 479–494 (STYAEVEPSGHEKEGF) are compositionally biased toward basic and acidic residues. The tract at residues 479-500 (STYAEVEPSGHEKEGFMEAEQC) is disordered.

It belongs to the plexin family. As to quaternary structure, interacts with NID1. May interact with CTTN. In terms of processing, N-glycosylated. Detected in urine (at protein level). Detected in endothelial cells from colorectal cancer, and in endothelial cells from primary cancers of the lung, liver, pancreas, breast and brain. Not detectable in endothelial cells from normal tissue. Expressed in fibrovascular membrane with increased expression in individuals with proliferative diabetic retinopathy.

The protein resides in the secreted. It is found in the cell membrane. It localises to the cell junction. Its subcellular location is the tight junction. The protein localises to the cytoplasm. Plays a critical role in endothelial cell capillary morphogenesis. In Homo sapiens (Human), this protein is Plexin domain-containing protein 1 (PLXDC1).